The sequence spans 792 residues: RAD50-interacting protein 1 (792 aa).

A disordered region spans residues 1-22 (MLPAGEIGASPAAPCCSESGDE). Residues 103-124 (IRSALKNAEESKQFLNQFLEQE) are a coiled coil. The region spanning 220–792 (WHKILKDKLT…LRTNWPNTGK (573 aa)) is the RINT1/TIP20 domain.

It belongs to the RINT1 family. Component of the NRZ complex composed of NBAS, ZW10 and RINT1/TIP20L; NRZ associates with SNAREs STX18, USE1L, BNIP1/SEC20L and SEC22B (the assembly has been described as syntaxin 18 complex). Interacts directly with BNIP1/SEC20L and ZW10. Interacts with UVRAG. Interacts with RAD50 during late S and G2/M phases. Interacts with RBL2, preferentially with the active, hypophosphorylated form.

The protein resides in the cytoplasm. The protein localises to the endoplasmic reticulum membrane. In terms of biological role, involved in regulation of membrane traffic between the Golgi and the endoplasmic reticulum (ER); the function is proposed to depend on its association in the NRZ complex which is believed to play a role in SNARE assembly at the ER. May play a role in cell cycle checkpoint control. Essential for telomere length control. This Homo sapiens (Human) protein is RAD50-interacting protein 1 (RINT1).